The sequence spans 248 residues: Floral homeotic protein AGAMOUS (248 aa).

The MADS-box domain occupies R19 to Y73. One can recognise a K-box domain in the interval A103–A193. The interval Q196 to Q219 is disordered. A compositionally biased stretch (polar residues) spans M202–Y211.

It localises to the nucleus. Probable transcription factor involved in regulating genes that determines stamen and carpel development in wild-type flowers. The polypeptide is Floral homeotic protein AGAMOUS (AG1) (Nicotiana tabacum (Common tobacco)).